A 350-amino-acid polypeptide reads, in one-letter code: MRVKAPGRINIIGEHTDYNDGYVLPFAVNRFVFLTIEDSGKFVFHSENMNETVEMEKIEKLNRWTDYISGVIKAFEKRGYKVSPVKISVSSNLPMGAGLSSSAALEMATAYAISEHFGFHLPKLELVKIAREAEVEFVGVRCGIMDQFTSAFGKKDHAIFLDTMTLEYEYVPLKLEGYEINLVDSNVKHELSSSEYNKRRQECEEVLRVLGKRSFREVTKEDLKKLPDVLKKRAQHVLEENERVLKSVQALKEGDFETLGRLLFSSHESLRDLYEVSCEQTDFIVDFLKGREGILGARMVGGGFGGGVIVLSKKGAFEKIKEELKNAYRDRFKIELTFHEIESADGVQKI.

Position 14-17 (14-17) interacts with substrate; that stretch reads EHTD. ATP-binding positions include Ser46 and 96–102; that span reads GAGLSSS. Mg(2+) is bound by residues Ser102 and Glu134. Asp146 acts as the Proton acceptor in catalysis. Tyr196 is a substrate binding site.

This sequence belongs to the GHMP kinase family. GalK subfamily.

It is found in the cytoplasm. The enzyme catalyses alpha-D-galactose + ATP = alpha-D-galactose 1-phosphate + ADP + H(+). Its pathway is carbohydrate metabolism; galactose metabolism. Functionally, catalyzes the transfer of the gamma-phosphate of ATP to D-galactose to form alpha-D-galactose-1-phosphate (Gal-1-P). The polypeptide is Galactokinase (Thermotoga neapolitana).